The sequence spans 360 residues: Phospho-N-acetylmuramoyl-pentapeptide-transferase (360 aa).

Transmembrane regions (helical) follow at residues 21–41, 73–93, 98–118, 132–152, 168–188, 199–219, 236–256, 263–283, 288–308, and 338–358; these read YITF…LWIG, TMGG…WADL, IWFV…DDYW, WKYF…YAVG, VMPQ…VGTS, GLAI…AWAT, AGEL…FLWY, VFMG…IAVL, LLLV…ILQV, and VIVR…VTLK.

Belongs to the glycosyltransferase 4 family. MraY subfamily. Mg(2+) is required as a cofactor.

It is found in the cell inner membrane. The enzyme catalyses UDP-N-acetyl-alpha-D-muramoyl-L-alanyl-gamma-D-glutamyl-meso-2,6-diaminopimeloyl-D-alanyl-D-alanine + di-trans,octa-cis-undecaprenyl phosphate = di-trans,octa-cis-undecaprenyl diphospho-N-acetyl-alpha-D-muramoyl-L-alanyl-D-glutamyl-meso-2,6-diaminopimeloyl-D-alanyl-D-alanine + UMP. It participates in cell wall biogenesis; peptidoglycan biosynthesis. Functionally, catalyzes the initial step of the lipid cycle reactions in the biosynthesis of the cell wall peptidoglycan: transfers peptidoglycan precursor phospho-MurNAc-pentapeptide from UDP-MurNAc-pentapeptide onto the lipid carrier undecaprenyl phosphate, yielding undecaprenyl-pyrophosphoryl-MurNAc-pentapeptide, known as lipid I. The sequence is that of Phospho-N-acetylmuramoyl-pentapeptide-transferase from Actinobacillus pleuropneumoniae serotype 5b (strain L20).